The chain runs to 92 residues: UPF0298 protein BH2594 (92 aa).

The protein belongs to the UPF0298 family.

The protein resides in the cytoplasm. This is UPF0298 protein BH2594 from Halalkalibacterium halodurans (strain ATCC BAA-125 / DSM 18197 / FERM 7344 / JCM 9153 / C-125) (Bacillus halodurans).